The primary structure comprises 602 residues: Elongation factor 4 (602 aa).

Residues 2-184 enclose the tr-type G domain; that stretch reads DHIRNFSIIA…AVIARMPPPK (183 aa). GTP is bound by residues 14-19 and 131-134; these read DHGKST and NKMD.

Belongs to the TRAFAC class translation factor GTPase superfamily. Classic translation factor GTPase family. LepA subfamily.

Its subcellular location is the cell inner membrane. The catalysed reaction is GTP + H2O = GDP + phosphate + H(+). Required for accurate and efficient protein synthesis under certain stress conditions. May act as a fidelity factor of the translation reaction, by catalyzing a one-codon backward translocation of tRNAs on improperly translocated ribosomes. Back-translocation proceeds from a post-translocation (POST) complex to a pre-translocation (PRE) complex, thus giving elongation factor G a second chance to translocate the tRNAs correctly. Binds to ribosomes in a GTP-dependent manner. This is Elongation factor 4 from Leptothrix cholodnii (strain ATCC 51168 / LMG 8142 / SP-6) (Leptothrix discophora (strain SP-6)).